We begin with the raw amino-acid sequence, 220 residues long: Glutathione S-transferase U23 (220 aa).

One can recognise a GST N-terminal domain in the interval 3-82 (EEIILLDYWA…YIDELWPDTN (80 aa)). Residues 13–14 (SM), 39–40 (NK), 53–54 (KI), and 66–67 (ES) contribute to the glutathione site. A GST C-terminal domain is found at 88 to 208 (DPYQRAQARF…LPDSDKVLKS (121 aa)).

The protein belongs to the GST superfamily. Tau family.

It localises to the cytoplasm. The protein resides in the cytosol. It catalyses the reaction RX + glutathione = an S-substituted glutathione + a halide anion + H(+). Functionally, may be involved in the conjugation of reduced glutathione to a wide number of exogenous and endogenous hydrophobic electrophiles and have a detoxification role against certain herbicides. The sequence is that of Glutathione S-transferase U23 (GSTU23) from Arabidopsis thaliana (Mouse-ear cress).